The following is a 322-amino-acid chain: Ferredoxin--NADP reductase (322 aa).

Residues aspartate 33, glutamine 41, tyrosine 46, alanine 86, phenylalanine 120, aspartate 278, and serine 319 each coordinate FAD.

This sequence belongs to the ferredoxin--NADP reductase type 2 family. As to quaternary structure, homodimer. The cofactor is FAD.

The enzyme catalyses 2 reduced [2Fe-2S]-[ferredoxin] + NADP(+) + H(+) = 2 oxidized [2Fe-2S]-[ferredoxin] + NADPH. In Salinispora tropica (strain ATCC BAA-916 / DSM 44818 / JCM 13857 / NBRC 105044 / CNB-440), this protein is Ferredoxin--NADP reductase.